Consider the following 396-residue polypeptide: MEQTWRWYGPNDPVSLDDVRQAGATGVVTALHHIPNGEVWPVEEIKKRQAVLADKGLTWSVVESIPVHEDIKTHSGQFETWIANYQQSIRNLATCGIDTVCYNFMPILDWTRTDLEYQMPDGSRALRFDQIAFAAFELHILKRPSAEADYSAEEQQQALKWFEDASDADIEKLTRNIIAGLPGAEEGYTLDQFRARLAEYGDIDKNQLRENMAYFLRAIVPVAEACGLRLAVHPDDPPRPILGLPRIVSTIEDMQWLKETVDSINNGFTMCTGSYGVREDNDLVKMIEAFGDRIHFTHLRATCRENNPKTFHEAAHLGGDVNMVAVVDAILSEEQRRKHAGDMRPIPFRPDHGHQMLDDLRKKTNPGYSAIGRLKGMAEVRGVELALKMLKYPELL.

The protein belongs to the mannonate dehydratase family. Requires Fe(2+) as cofactor. Mn(2+) serves as cofactor.

It carries out the reaction D-mannonate = 2-dehydro-3-deoxy-D-gluconate + H2O. Its pathway is carbohydrate metabolism; pentose and glucuronate interconversion. Functionally, catalyzes the dehydration of D-mannonate. The sequence is that of Mannonate dehydratase from Enterobacter sp. (strain 638).